A 385-amino-acid chain; its full sequence is MQGPAVFIDAEIDDQAQELRQFLKGLGAEISEEKSTKGIEDDLHKIIGVCDVCFKDNTHSPEEIDAVLNSIVSIIVSIPLERGENLILSFCDKMTKAKETSLARVCLQSLWRLFSNLEVTSPLRYHVYYHLVQVAKQVNQVKEVFTGVEQLKAQFAQCPPSNEQMQKLYRLLHDVLKDSNSELASKVMIELLGTYTAENASYAREDAMKCIVTALADPNTFLLDPLLSLKPVRFLEGELIHDLLSVFVSEKLPSYLEFYKNHKEFVNSQGLNHEQNIKKMRLLSFMQLAESNSEMTFQQLQDELQIKEEEVEPFIIEVLKTKLVRARMDQRARKVHISSTMHRTFGRPQWQQLRDLLLSWKSNLTLVQENINTVSAAQMELAQRQ.

Positions 180-342 (NSELASKVMI…RKVHISSTMH (163 aa)) constitute a PCI domain.

It belongs to the eIF-3 subunit M family. Component of the eukaryotic translation initiation factor 3 (eIF-3) complex.

Its subcellular location is the cytoplasm. Component of the eukaryotic translation initiation factor 3 (eIF-3) complex, which is involved in protein synthesis of a specialized repertoire of mRNAs and, together with other initiation factors, stimulates binding of mRNA and methionyl-tRNAi to the 40S ribosome. The eIF-3 complex specifically targets and initiates translation of a subset of mRNAs involved in cell proliferation. In Anopheles gambiae (African malaria mosquito), this protein is Eukaryotic translation initiation factor 3 subunit M.